Consider the following 337-residue polypeptide: Beta-ketoacyl-[acyl-carrier-protein] synthase III (337 aa).

Catalysis depends on residues cysteine 119 and histidine 260. The segment at 261 to 265 is ACP-binding; it reads QANQR. The active site involves asparagine 290.

The protein belongs to the thiolase-like superfamily. FabH family. In terms of assembly, homodimer.

It localises to the cytoplasm. It catalyses the reaction malonyl-[ACP] + acetyl-CoA + H(+) = 3-oxobutanoyl-[ACP] + CO2 + CoA. It participates in lipid metabolism; fatty acid biosynthesis. Catalyzes the condensation reaction of fatty acid synthesis by the addition to an acyl acceptor of two carbons from malonyl-ACP. Catalyzes the first condensation reaction which initiates fatty acid synthesis and may therefore play a role in governing the total rate of fatty acid production. Possesses both acetoacetyl-ACP synthase and acetyl transacylase activities. Its substrate specificity determines the biosynthesis of branched-chain and/or straight-chain of fatty acids. The polypeptide is Beta-ketoacyl-[acyl-carrier-protein] synthase III (Synechococcus sp. (strain WH7803)).